The following is a 322-amino-acid chain: AA9 family lytic polysaccharide monooxygenase B (322 aa).

An N-terminal signal peptide occupies residues 1 to 17; that stretch reads MFSKSIIAASLLTAVTA. Position 18 (histidine 18) interacts with Cu(2+). N-linked (GlcNAc...) asparagine glycans are attached at residues asparagine 53 and asparagine 68. Cysteine 56 and cysteine 173 are joined by a disulfide. Position 87 (histidine 87) interacts with Cu(2+). Asparagine 121 and asparagine 133 each carry an N-linked (GlcNAc...) asparagine glycan. The O2 site is built by histidine 159 and glutamine 168. Position 170 (tyrosine 170) interacts with Cu(2+). The N-linked (GlcNAc...) asparagine glycan is linked to asparagine 197.

This sequence belongs to the polysaccharide monooxygenase AA9 family. Cu(2+) serves as cofactor.

It is found in the secreted. The enzyme catalyses [(1-&gt;4)-beta-D-glucosyl]n+m + reduced acceptor + O2 = 4-dehydro-beta-D-glucosyl-[(1-&gt;4)-beta-D-glucosyl]n-1 + [(1-&gt;4)-beta-D-glucosyl]m + acceptor + H2O.. Functionally, lytic polysaccharide monooxygenase (LPMO) that depolymerizes crystalline and amorphous polysaccharides via the oxidation of scissile alpha- or beta-(1-4)-glycosidic bonds, yielding C1 and C4 oxidation products. Catalysis by LPMOs requires the reduction of the active-site copper from Cu(II) to Cu(I) by a reducing agent and H(2)O(2) or O(2) as a cosubstrate. The polypeptide is AA9 family lytic polysaccharide monooxygenase B (Botryotinia fuckeliana (strain B05.10) (Noble rot fungus)).